A 294-amino-acid chain; its full sequence is tRNA dimethylallyltransferase (294 aa).

11 to 18 (GPTAVGKT) contacts ATP. 13-18 (TAVGKT) serves as a coordination point for substrate. Positions 36–39 (DSQQ) are interaction with substrate tRNA.

This sequence belongs to the IPP transferase family. Monomer. Mg(2+) is required as a cofactor.

It catalyses the reaction adenosine(37) in tRNA + dimethylallyl diphosphate = N(6)-dimethylallyladenosine(37) in tRNA + diphosphate. Catalyzes the transfer of a dimethylallyl group onto the adenine at position 37 in tRNAs that read codons beginning with uridine, leading to the formation of N6-(dimethylallyl)adenosine (i(6)A). This chain is tRNA dimethylallyltransferase, found in Lactococcus lactis subsp. cremoris (strain MG1363).